Consider the following 271-residue polypeptide: Ribosomal RNA small subunit methyltransferase J (271 aa).

Residues 116–117 (RD), 132–133 (ER), 168–169 (SS), and Asp-190 contribute to the S-adenosyl-L-methionine site.

Belongs to the methyltransferase superfamily. RsmJ family.

The protein localises to the cytoplasm. The catalysed reaction is guanosine(1516) in 16S rRNA + S-adenosyl-L-methionine = N(2)-methylguanosine(1516) in 16S rRNA + S-adenosyl-L-homocysteine + H(+). Its function is as follows. Specifically methylates the guanosine in position 1516 of 16S rRNA. This chain is Ribosomal RNA small subunit methyltransferase J, found in Shewanella piezotolerans (strain WP3 / JCM 13877).